A 167-amino-acid polypeptide reads, in one-letter code: uncharacterized protein (167 aa).

The interval 148-167 (NKESRGENDGGEERESANIY) is disordered.

This is an uncharacterized protein from Homo sapiens (Human).